Consider the following 304-residue polypeptide: Lipoyl synthase (304 aa).

7 residues coordinate [4Fe-4S] cluster: Cys-41, Cys-46, Cys-52, Cys-68, Cys-72, Cys-75, and Ser-281. In terms of domain architecture, Radical SAM core spans 54-270 (GARRTATFMI…RKIAMEKGFK (217 aa)). The interval 282 to 304 (YHADEQVNEAAKEKQRQGEEQLN) is disordered.

Belongs to the radical SAM superfamily. Lipoyl synthase family. Requires [4Fe-4S] cluster as cofactor.

Its subcellular location is the cytoplasm. The enzyme catalyses [[Fe-S] cluster scaffold protein carrying a second [4Fe-4S](2+) cluster] + N(6)-octanoyl-L-lysyl-[protein] + 2 oxidized [2Fe-2S]-[ferredoxin] + 2 S-adenosyl-L-methionine + 4 H(+) = [[Fe-S] cluster scaffold protein] + N(6)-[(R)-dihydrolipoyl]-L-lysyl-[protein] + 4 Fe(3+) + 2 hydrogen sulfide + 2 5'-deoxyadenosine + 2 L-methionine + 2 reduced [2Fe-2S]-[ferredoxin]. It participates in protein modification; protein lipoylation via endogenous pathway; protein N(6)-(lipoyl)lysine from octanoyl-[acyl-carrier-protein]. Functionally, catalyzes the radical-mediated insertion of two sulfur atoms into the C-6 and C-8 positions of the octanoyl moiety bound to the lipoyl domains of lipoate-dependent enzymes, thereby converting the octanoylated domains into lipoylated derivatives. The sequence is that of Lipoyl synthase from Staphylococcus epidermidis (strain ATCC 35984 / DSM 28319 / BCRC 17069 / CCUG 31568 / BM 3577 / RP62A).